Here is a 522-residue protein sequence, read N- to C-terminus: Light-independent protochlorophyllide reductase subunit B (522 aa).

D36 provides a ligand contact to [4Fe-4S] cluster. Residue D274 is the Proton donor of the active site. 409-410 is a substrate binding site; that stretch reads GL. The tract at residues 426–464 is disordered; it reads DEAGPSHHGGKAVPASAPRAEATADEGSTPEEAVPPVAA. Positions 455–464 are enriched in low complexity; it reads PEEAVPPVAA.

Belongs to the ChlB/BchB/BchZ family. Protochlorophyllide reductase is composed of three subunits; BchL, BchN and BchB. Forms a heterotetramer of two BchB and two BchN subunits. [4Fe-4S] cluster serves as cofactor.

It carries out the reaction chlorophyllide a + oxidized 2[4Fe-4S]-[ferredoxin] + 2 ADP + 2 phosphate = protochlorophyllide a + reduced 2[4Fe-4S]-[ferredoxin] + 2 ATP + 2 H2O. It participates in porphyrin-containing compound metabolism; bacteriochlorophyll biosynthesis (light-independent). Its function is as follows. Component of the dark-operative protochlorophyllide reductase (DPOR) that uses Mg-ATP and reduced ferredoxin to reduce ring D of protochlorophyllide (Pchlide) to form chlorophyllide a (Chlide). This reaction is light-independent. The NB-protein (BchN-BchB) is the catalytic component of the complex. This Cereibacter sphaeroides (strain ATCC 17025 / ATH 2.4.3) (Rhodobacter sphaeroides) protein is Light-independent protochlorophyllide reductase subunit B.